The following is a 101-amino-acid chain: Anti-sigma factor RshA (101 aa).

An inhibits SigH sigma factor activity region spans residues 9 to 15 (DAHADHD). Cys23 contacts iron-sulfur cluster. 2 inhibits SigH sigma factor activity regions span residues 28-34 (AEVWTLL) and 38-44 (CTPETRE). His49, Cys53, and Cys56 together coordinate iron-sulfur cluster. Position 94 is a phosphothreonine (Thr94).

The protein belongs to the zinc-associated anti-sigma factor (ZAS) superfamily. Interacts with cognate sigma factor SigH under reducing conditions. Binding inhibits the interaction of SigH with the RNA polymerase catalytic core. Iron-sulfur cluster is required as a cofactor. In terms of processing, phosphorylated, probably by PknB. Phosphorylation decreases interaction with SigH, leading to increased SigH-mediated transcription.

An redox-regulated anti-sigma factor for extracytoplasmic function (ECF) sigma factor SigH. ECF sigma factors are held in an inactive form by a cognate anti-sigma factor. RshA and some peptides derived from it inhibit the sigma factor activity of SigH. Probably releases SigH during oxidative stress. This chain is Anti-sigma factor RshA (rshA), found in Mycobacterium tuberculosis (strain CDC 1551 / Oshkosh).